A 118-amino-acid polypeptide reads, in one-letter code: UPF0342 protein BCG9842_B4422 (118 aa).

It belongs to the UPF0342 family.

The sequence is that of UPF0342 protein BCG9842_B4422 from Bacillus cereus (strain G9842).